We begin with the raw amino-acid sequence, 467 residues long: Acetyl-CoA decarbonylase/synthase complex subunit beta (467 aa).

Residues C193, C196, C282, and C284 each coordinate [Ni-Fe-S] cluster. Residues 403 to 428 (RWAEEEEEEEEKAPEEEAPAEEPTME) are disordered. Residues 405-426 (AEEEEEEEEKAPEEEAPAEEPT) are compositionally biased toward acidic residues.

It belongs to the CdhC family. In terms of assembly, monomer. The ACDS complex is made up of alpha, epsilon, beta, gamma and delta chains with a probable stoichiometry of (alpha(2)epsilon(2))(4)-beta(8)-(gamma(1)delta(1))(8). [Ni-Fe-S] cluster is required as a cofactor.

The catalysed reaction is Co(I)-[corrinoid Fe-S protein] + acetyl-CoA + H(+) = methyl-Co(III)-[corrinoid Fe-S protein] + CO + CoA. Its function is as follows. Part of a complex that catalyzes the reversible cleavage of acetyl-CoA, allowing autotrophic growth from CO(2). The alpha-epsilon complex generates CO from CO(2), while the beta subunit (this protein) combines the CO with CoA and a methyl group to form acetyl-CoA. The methyl group, which is incorporated into acetyl-CoA, is transferred to the beta subunit by a corrinoid iron-sulfur protein (the gamma-delta complex). This chain is Acetyl-CoA decarbonylase/synthase complex subunit beta, found in Methanopyrus kandleri (strain AV19 / DSM 6324 / JCM 9639 / NBRC 100938).